Here is a 54-residue protein sequence, read N- to C-terminus: Secreted virulence factor MC69 (54 aa).

Residues 1-18 form the signal peptide; sequence MKFTLALLTTLCASLASA. Cysteines 38 and 48 form a disulfide.

This sequence belongs to the MC69 virulence factor family.

It is found in the secreted. Its function is as follows. Secreted protein required for appressorial penetration of intact host epidermal cells and for pathogenicity. In Colletotrichum orbiculare (strain 104-T / ATCC 96160 / CBS 514.97 / LARS 414 / MAFF 240422) (Cucumber anthracnose fungus), this protein is Secreted virulence factor MC69.